Consider the following 358-residue polypeptide: NADH-quinone oxidoreductase subunit H (358 aa).

8 helical membrane passes run Ile-20–Ile-40, Ala-95–Ile-115, Ile-128–Gly-148, Ile-168–Met-188, Val-206–Val-226, Gly-253–Leu-273, Thr-295–Ile-315, and Val-334–Leu-354.

Belongs to the complex I subunit 1 family. As to quaternary structure, NDH-1 is composed of 14 different subunits. Subunits NuoA, H, J, K, L, M, N constitute the membrane sector of the complex.

The protein resides in the cell inner membrane. The enzyme catalyses a quinone + NADH + 5 H(+)(in) = a quinol + NAD(+) + 4 H(+)(out). Functionally, NDH-1 shuttles electrons from NADH, via FMN and iron-sulfur (Fe-S) centers, to quinones in the respiratory chain. The immediate electron acceptor for the enzyme in this species is believed to be ubiquinone. Couples the redox reaction to proton translocation (for every two electrons transferred, four hydrogen ions are translocated across the cytoplasmic membrane), and thus conserves the redox energy in a proton gradient. This subunit may bind ubiquinone. The protein is NADH-quinone oxidoreductase subunit H of Neisseria meningitidis serogroup B (strain ATCC BAA-335 / MC58).